A 121-amino-acid polypeptide reads, in one-letter code: Large ribosomal subunit protein eL18 (121 aa).

It belongs to the eukaryotic ribosomal protein eL18 family.

This is Large ribosomal subunit protein eL18 from Methanothermobacter thermautotrophicus (strain ATCC 29096 / DSM 1053 / JCM 10044 / NBRC 100330 / Delta H) (Methanobacterium thermoautotrophicum).